We begin with the raw amino-acid sequence, 344 residues long: Holliday junction branch migration complex subunit RuvB (344 aa).

The interval 1–183 (MPDRELISGD…FGLVLRLDPY (183 aa)) is large ATPase domain (RuvB-L). Residues L22, R23, G64, K67, T68, T69, 130-132 (EDF), R173, Y183, and R220 each bind ATP. T68 serves as a coordination point for Mg(2+). Residues 184–254 (NTEELKAIVK…VAQTALNLLD (71 aa)) form a small ATPAse domain (RuvB-S) region. The interval 257–344 (RYGLDEIDQK…EGDHPSLFEA (88 aa)) is head domain (RuvB-H). The DNA site is built by R312 and R317.

The protein belongs to the RuvB family. Homohexamer. Forms an RuvA(8)-RuvB(12)-Holliday junction (HJ) complex. HJ DNA is sandwiched between 2 RuvA tetramers; dsDNA enters through RuvA and exits via RuvB. An RuvB hexamer assembles on each DNA strand where it exits the tetramer. Each RuvB hexamer is contacted by two RuvA subunits (via domain III) on 2 adjacent RuvB subunits; this complex drives branch migration. In the full resolvosome a probable DNA-RuvA(4)-RuvB(12)-RuvC(2) complex forms which resolves the HJ.

It is found in the cytoplasm. It carries out the reaction ATP + H2O = ADP + phosphate + H(+). The RuvA-RuvB-RuvC complex processes Holliday junction (HJ) DNA during genetic recombination and DNA repair, while the RuvA-RuvB complex plays an important role in the rescue of blocked DNA replication forks via replication fork reversal (RFR). RuvA specifically binds to HJ cruciform DNA, conferring on it an open structure. The RuvB hexamer acts as an ATP-dependent pump, pulling dsDNA into and through the RuvAB complex. RuvB forms 2 homohexamers on either side of HJ DNA bound by 1 or 2 RuvA tetramers; 4 subunits per hexamer contact DNA at a time. Coordinated motions by a converter formed by DNA-disengaged RuvB subunits stimulates ATP hydrolysis and nucleotide exchange. Immobilization of the converter enables RuvB to convert the ATP-contained energy into a lever motion, pulling 2 nucleotides of DNA out of the RuvA tetramer per ATP hydrolyzed, thus driving DNA branch migration. The RuvB motors rotate together with the DNA substrate, which together with the progressing nucleotide cycle form the mechanistic basis for DNA recombination by continuous HJ branch migration. Branch migration allows RuvC to scan DNA until it finds its consensus sequence, where it cleaves and resolves cruciform DNA. In Solibacter usitatus (strain Ellin6076), this protein is Holliday junction branch migration complex subunit RuvB.